We begin with the raw amino-acid sequence, 359 residues long: DNA replication and repair protein RecF (359 aa).

30-37 (GPNGSGKT) is a binding site for ATP.

This sequence belongs to the RecF family.

The protein localises to the cytoplasm. Functionally, the RecF protein is involved in DNA metabolism; it is required for DNA replication and normal SOS inducibility. RecF binds preferentially to single-stranded, linear DNA. It also seems to bind ATP. In Vibrio parahaemolyticus serotype O3:K6 (strain RIMD 2210633), this protein is DNA replication and repair protein RecF.